A 394-amino-acid chain; its full sequence is Ceramide synthase 4 (394 aa).

Over Met1 to Arg31 the chain is Lumenal. Asn19 carries N-linked (GlcNAc...) asparagine glycosylation. The helical transmembrane segment at Val32–Met52 threads the bilayer. Residues Trp67 to Gln128 are homeobox-like. One can recognise a TLC domain in the interval Lys131–Lys332. 4 helical membrane-spanning segments follow: residues Phe140–Leu160, Leu179–Phe199, Gln209–Leu229, and Val260–Phe280. A Last loop motif motif is present at residues Glu291–Gly301. The chain crosses the membrane as a helical span at residues Phe304–Leu324. Topologically, residues Arg325–Thr394 are cytoplasmic. Positions Arg341–Thr394 are disordered. Phosphoserine occurs at positions 342, 349, and 350.

Post-translationally, phosphorylated at the C-terminus by CK2. In terms of processing, N-glycosylated.

It is found in the endoplasmic reticulum membrane. It catalyses the reaction sphinganine + octadecanoyl-CoA = N-(octadecanoyl)-sphinganine + CoA + H(+). It carries out the reaction eicosanoyl-CoA + sphinganine = N-eicosanoylsphinganine + CoA + H(+). The catalysed reaction is docosanoyl-CoA + sphinganine = N-docosanoylsphinganine + CoA + H(+). The enzyme catalyses tetracosanoyl-CoA + sphinganine = N-tetracosanoylsphinganine + CoA + H(+). It catalyses the reaction hexacosanoyl-CoA + sphinganine = N-hexacosanoylsphinganine + CoA + H(+). It carries out the reaction a fatty acyl-CoA + sphing-4-enine = an N-acylsphing-4-enine + CoA + H(+). The catalysed reaction is sphing-4-enine + octadecanoyl-CoA = N-octadecanoylsphing-4-enine + CoA + H(+). The enzyme catalyses hexadecasphinganine + octadecanoyl-CoA = N-octadecanoylhexadecasphinganine + CoA + H(+). The protein operates within lipid metabolism; sphingolipid metabolism. In terms of biological role, ceramide synthase that catalyzes formation of ceramide from sphinganine and acyl-CoA substrates, with high selectivity toward long and very-long chains (C18:0-C22:0) as acyl donor. This is Ceramide synthase 4 from Homo sapiens (Human).